The sequence spans 339 residues: Ketol-acid reductoisomerase (NADP(+)) (339 aa).

In terms of domain architecture, KARI N-terminal Rossmann spans 1 to 182 (MRVYYDRDAD…GGGRSGIIET (182 aa)). Residues 24 to 27 (YGSQ), Lys48, Ser51, Thr53, and 83 to 86 (DELQ) each bind NADP(+). Residue His108 is part of the active site. Gly134 lines the NADP(+) pocket. In terms of domain architecture, KARI C-terminal knotted spans 183 to 328 (NFREECETDL…AKLRGMMPWI (146 aa)). 4 residues coordinate Mg(2+): Asp191, Glu195, Glu227, and Glu231. Ser252 is a binding site for substrate.

The protein belongs to the ketol-acid reductoisomerase family. The cofactor is Mg(2+).

It carries out the reaction (2R)-2,3-dihydroxy-3-methylbutanoate + NADP(+) = (2S)-2-acetolactate + NADPH + H(+). The enzyme catalyses (2R,3R)-2,3-dihydroxy-3-methylpentanoate + NADP(+) = (S)-2-ethyl-2-hydroxy-3-oxobutanoate + NADPH + H(+). Its pathway is amino-acid biosynthesis; L-isoleucine biosynthesis; L-isoleucine from 2-oxobutanoate: step 2/4. The protein operates within amino-acid biosynthesis; L-valine biosynthesis; L-valine from pyruvate: step 2/4. In terms of biological role, involved in the biosynthesis of branched-chain amino acids (BCAA). Catalyzes an alkyl-migration followed by a ketol-acid reduction of (S)-2-acetolactate (S2AL) to yield (R)-2,3-dihydroxy-isovalerate. In the isomerase reaction, S2AL is rearranged via a Mg-dependent methyl migration to produce 3-hydroxy-3-methyl-2-ketobutyrate (HMKB). In the reductase reaction, this 2-ketoacid undergoes a metal-dependent reduction by NADPH to yield (R)-2,3-dihydroxy-isovalerate. The sequence is that of Ketol-acid reductoisomerase (NADP(+)) from Rhizobium etli (strain ATCC 51251 / DSM 11541 / JCM 21823 / NBRC 15573 / CFN 42).